The sequence spans 130 residues: MARQTRKVSPTKIKKRTYRGIVYIQAGHHNTIITLANLRGEVLCWSSAGACGFRGKRKATTFAAKKAAEVVAKKSREFALNEAKILVTGPGQGRETAIREIFKAGIKVNVIREKTGIPHNGCRPPKKRRV.

This sequence belongs to the universal ribosomal protein uS11 family. As to quaternary structure, part of the 30S ribosomal subunit.

The protein resides in the plastid. It localises to the chloroplast. This chain is Small ribosomal subunit protein uS11c, found in Tetradesmus obliquus (Green alga).